Reading from the N-terminus, the 221-residue chain is Molybdenum cofactor guanylyltransferase (221 aa).

GTP is bound by residues 18-20 (IAG), K35, N63, D81, and D112. D112 contacts Mg(2+).

The protein belongs to the MobA family. In terms of assembly, monomer. Mg(2+) serves as cofactor.

It is found in the cytoplasm. It carries out the reaction Mo-molybdopterin + GTP + H(+) = Mo-molybdopterin guanine dinucleotide + diphosphate. Transfers a GMP moiety from GTP to Mo-molybdopterin (Mo-MPT) cofactor (Moco or molybdenum cofactor) to form Mo-molybdopterin guanine dinucleotide (Mo-MGD) cofactor. The polypeptide is Molybdenum cofactor guanylyltransferase (Brucella abortus (strain S19)).